The following is a 313-amino-acid chain: Ribosomal RNA small subunit methyltransferase H (313 aa).

S-adenosyl-L-methionine is bound by residues 35-37 (GGH), Asp-55, Phe-79, Asp-101, and Gln-108.

It belongs to the methyltransferase superfamily. RsmH family.

The protein localises to the cytoplasm. The enzyme catalyses cytidine(1402) in 16S rRNA + S-adenosyl-L-methionine = N(4)-methylcytidine(1402) in 16S rRNA + S-adenosyl-L-homocysteine + H(+). In terms of biological role, specifically methylates the N4 position of cytidine in position 1402 (C1402) of 16S rRNA. This chain is Ribosomal RNA small subunit methyltransferase H, found in Escherichia coli O139:H28 (strain E24377A / ETEC).